A 447-amino-acid chain; its full sequence is N-succinylarginine dihydrolase (447 aa).

Residues 19–28, asparagine 110, and 137–138 contribute to the substrate site; these read AGLSFGNEAS and HR. Residue glutamate 174 is part of the active site. Arginine 212 provides a ligand contact to substrate. Histidine 248 is a catalytic residue. Positions 250 and 359 each coordinate substrate. Cysteine 365 (nucleophile) is an active-site residue.

This sequence belongs to the succinylarginine dihydrolase family. In terms of assembly, homodimer.

It carries out the reaction N(2)-succinyl-L-arginine + 2 H2O + 2 H(+) = N(2)-succinyl-L-ornithine + 2 NH4(+) + CO2. Its pathway is amino-acid degradation; L-arginine degradation via AST pathway; L-glutamate and succinate from L-arginine: step 2/5. Catalyzes the hydrolysis of N(2)-succinylarginine into N(2)-succinylornithine, ammonia and CO(2). In Salmonella schwarzengrund (strain CVM19633), this protein is N-succinylarginine dihydrolase.